The sequence spans 208 residues: 3-demethoxyubiquinol 3-hydroxylase (208 aa).

Residues Glu-57, Glu-87, His-90, Glu-139, Glu-171, and His-174 each contribute to the Fe cation site.

It belongs to the COQ7 family. Fe cation serves as cofactor.

It is found in the cell membrane. The enzyme catalyses a 5-methoxy-2-methyl-3-(all-trans-polyprenyl)benzene-1,4-diol + AH2 + O2 = a 3-demethylubiquinol + A + H2O. It functions in the pathway cofactor biosynthesis; ubiquinone biosynthesis. Its function is as follows. Catalyzes the hydroxylation of 2-nonaprenyl-3-methyl-6-methoxy-1,4-benzoquinol during ubiquinone biosynthesis. The protein is 3-demethoxyubiquinol 3-hydroxylase of Nitrosomonas europaea (strain ATCC 19718 / CIP 103999 / KCTC 2705 / NBRC 14298).